The chain runs to 569 residues: RNA demethylase ALKBH10B (569 aa).

Residues 118 to 151 are a coiled coil; the sequence is QKVAAKKAEDLKQKKTEEEAEEDLKEVVATEEEE. The segment at 164–190 is disordered; the sequence is ENDVNGDVEDVEDDSPTSDITDSGSHQ. Residues 167 to 179 are compositionally biased toward acidic residues; it reads VNGDVEDVEDDSP. Residues 180-189 show a composition bias toward polar residues; the sequence is TSDITDSGSH. Fe cation contacts are provided by H366, E368, and H421. R430 is a 2-oxoglutarate binding site. Residues 531 to 545 are compositionally biased toward basic residues; it reads KHVKHLPPRAQKKRL. The disordered stretch occupies residues 531–569; it reads KHVKHLPPRAQKKRLLPLPPAASSSPAGGSTSEPVITVG. Over residues 551-560 the composition is skewed to low complexity; it reads AASSSPAGGS.

The protein belongs to the alkB family. Requires Fe(2+) as cofactor.

It catalyses the reaction an N(6)-methyladenosine in mRNA + 2-oxoglutarate + O2 = an adenosine in mRNA + formaldehyde + succinate + CO2. Its function is as follows. Dioxygenase that demethylates RNA by oxidative demethylation: specifically demethylates N(6)-methyladenosine (m6A) RNA, the most prevalent internal modification of messenger RNA (mRNA) in higher eukaryotes. ALKBH10B-mediated mRNA m6A demethylation stabilizes the mRNA of the key flowering time regulators FT, SPL3 and SPL9, which are involved in the control of floral transition. This chain is RNA demethylase ALKBH10B, found in Arabidopsis thaliana (Mouse-ear cress).